A 189-amino-acid polypeptide reads, in one-letter code: UPF0301 protein CCA_00630 (189 aa).

The protein belongs to the UPF0301 (AlgH) family.

This chain is UPF0301 protein CCA_00630, found in Chlamydia caviae (strain ATCC VR-813 / DSM 19441 / 03DC25 / GPIC) (Chlamydophila caviae).